We begin with the raw amino-acid sequence, 187 residues long: Translation initiation factor IF-3 (187 aa).

Belongs to the IF-3 family. In terms of assembly, monomer.

Its subcellular location is the cytoplasm. Its function is as follows. IF-3 binds to the 30S ribosomal subunit and shifts the equilibrium between 70S ribosomes and their 50S and 30S subunits in favor of the free subunits, thus enhancing the availability of 30S subunits on which protein synthesis initiation begins. In Leptospira biflexa serovar Patoc (strain Patoc 1 / Ames), this protein is Translation initiation factor IF-3.